The primary structure comprises 301 residues: Phosphatidylserine decarboxylase proenzyme (301 aa).

Catalysis depends on charge relay system; for autoendoproteolytic cleavage activity residues D117, H173, and S260. S260 (schiff-base intermediate with substrate; via pyruvic acid; for decarboxylase activity) is an active-site residue. S260 is modified (pyruvic acid (Ser); by autocatalysis).

The protein belongs to the phosphatidylserine decarboxylase family. PSD-B subfamily. Prokaryotic type II sub-subfamily. Heterodimer of a large membrane-associated beta subunit and a small pyruvoyl-containing alpha subunit. Pyruvate serves as cofactor. In terms of processing, is synthesized initially as an inactive proenzyme. Formation of the active enzyme involves a self-maturation process in which the active site pyruvoyl group is generated from an internal serine residue via an autocatalytic post-translational modification. Two non-identical subunits are generated from the proenzyme in this reaction, and the pyruvate is formed at the N-terminus of the alpha chain, which is derived from the carboxyl end of the proenzyme. The autoendoproteolytic cleavage occurs by a canonical serine protease mechanism, in which the side chain hydroxyl group of the serine supplies its oxygen atom to form the C-terminus of the beta chain, while the remainder of the serine residue undergoes an oxidative deamination to produce ammonia and the pyruvoyl prosthetic group on the alpha chain. During this reaction, the Ser that is part of the protease active site of the proenzyme becomes the pyruvoyl prosthetic group, which constitutes an essential element of the active site of the mature decarboxylase.

Its subcellular location is the cell membrane. The enzyme catalyses a 1,2-diacyl-sn-glycero-3-phospho-L-serine + H(+) = a 1,2-diacyl-sn-glycero-3-phosphoethanolamine + CO2. The protein operates within phospholipid metabolism; phosphatidylethanolamine biosynthesis; phosphatidylethanolamine from CDP-diacylglycerol: step 2/2. Catalyzes the formation of phosphatidylethanolamine (PtdEtn) from phosphatidylserine (PtdSer). In Chlamydia muridarum (strain MoPn / Nigg), this protein is Phosphatidylserine decarboxylase proenzyme.